The following is a 684-amino-acid chain: Suppressor of presenilin protein 3 (684 aa).

C2H2-type zinc fingers lie at residues 21–43 (YKCH…LRRH), 48–71 (FDCE…LQSH), 123–145 (YKCP…ILSH), 261–283 (YLCR…FRHH), and 291–313 (WTCI…VKMH). Disordered regions lie at residues 337 to 359 (DLNK…HSDM), 419 to 440 (KNNS…SKSD), and 469 to 501 (TSKF…DQFQ). 2 consecutive C2H2-type zinc fingers follow at residues 590–612 (RECT…RDKH) and 618–641 (HTCP…FVDH). The tract at residues 652–684 (LPSSDSEDDNIPVPPDTPQRKKKAPKRGKRRGW) is disordered. Residues 671-684 (RKKKAPKRGKRRGW) show a composition bias toward basic residues.

The protein localises to the nucleus. Its function is as follows. Probable transcriptional regulator, which participates in the transcriptional repression of the presenilin protein hop-1. The protein is Suppressor of presenilin protein 3 (spr-3) of Caenorhabditis elegans.